Reading from the N-terminus, the 537-residue chain is CTP synthase (537 aa).

Residues 1 to 265 (MVHFIFVTGG…DNKVLKFFNI (265 aa)) form an amidoligase domain region. Serine 13 contributes to the CTP binding site. Serine 13 lines the UTP pocket. ATP is bound by residues 14-19 (SLGKGL) and aspartate 71. Residues aspartate 71 and glutamate 139 each coordinate Mg(2+). Residues 146-148 (DIE) and lysine 222 each bind CTP. Lysine 222 serves as a coordination point for UTP. A Glutamine amidotransferase type-1 domain is found at 290–536 (RIAIIAKYHK…IKAAIEYNKC (247 aa)). Residue glycine 352 coordinates L-glutamine. The Nucleophile; for glutamine hydrolysis role is filled by cysteine 379. L-glutamine contacts are provided by residues 380-383 (FGMQ), glutamate 403, and arginine 464. Catalysis depends on residues histidine 509 and glutamate 511.

This sequence belongs to the CTP synthase family. As to quaternary structure, homotetramer.

The enzyme catalyses UTP + L-glutamine + ATP + H2O = CTP + L-glutamate + ADP + phosphate + 2 H(+). It carries out the reaction L-glutamine + H2O = L-glutamate + NH4(+). The catalysed reaction is UTP + NH4(+) + ATP = CTP + ADP + phosphate + 2 H(+). Its pathway is pyrimidine metabolism; CTP biosynthesis via de novo pathway; CTP from UDP: step 2/2. Its activity is regulated as follows. Allosterically activated by GTP, when glutamine is the substrate; GTP has no effect on the reaction when ammonia is the substrate. The allosteric effector GTP functions by stabilizing the protein conformation that binds the tetrahedral intermediate(s) formed during glutamine hydrolysis. Inhibited by the product CTP, via allosteric rather than competitive inhibition. In terms of biological role, catalyzes the ATP-dependent amination of UTP to CTP with either L-glutamine or ammonia as the source of nitrogen. Regulates intracellular CTP levels through interactions with the four ribonucleotide triphosphates. In Rickettsia conorii (strain ATCC VR-613 / Malish 7), this protein is CTP synthase.